The chain runs to 137 residues: Small ribosomal subunit protein uS12 (137 aa).

Residues methionine 1–alanine 23 are disordered. Position 102 is a 3-methylthioaspartic acid (aspartate 102).

Belongs to the universal ribosomal protein uS12 family. As to quaternary structure, part of the 30S ribosomal subunit. Contacts proteins S8 and S17. May interact with IF1 in the 30S initiation complex.

With S4 and S5 plays an important role in translational accuracy. Its function is as follows. Interacts with and stabilizes bases of the 16S rRNA that are involved in tRNA selection in the A site and with the mRNA backbone. Located at the interface of the 30S and 50S subunits, it traverses the body of the 30S subunit contacting proteins on the other side and probably holding the rRNA structure together. The combined cluster of proteins S8, S12 and S17 appears to hold together the shoulder and platform of the 30S subunit. The polypeptide is Small ribosomal subunit protein uS12 (Levilactobacillus brevis (strain ATCC 367 / BCRC 12310 / CIP 105137 / JCM 1170 / LMG 11437 / NCIMB 947 / NCTC 947) (Lactobacillus brevis)).